A 514-amino-acid polypeptide reads, in one-letter code: Maturase K (514 aa).

This sequence belongs to the intron maturase 2 family. MatK subfamily.

It is found in the plastid. Its subcellular location is the chloroplast. In terms of biological role, usually encoded in the trnK tRNA gene intron. Probably assists in splicing its own and other chloroplast group II introns. This Tsuga canadensis (Eastern hemlock) protein is Maturase K.